A 253-amino-acid chain; its full sequence is Sulfoacetaldehyde reductase (253 aa).

6 to 30 (FITGATSGFGRAAAHRFAAAGWSLV) is a binding site for NADP(+). Ser139 contributes to the substrate binding site. Tyr152 functions as the Proton acceptor in the catalytic mechanism.

It belongs to the short-chain dehydrogenases/reductases (SDR) family. As to quaternary structure, homodimer and heterotetramer.

It carries out the reaction 2-hydroxyethane-1-sulfonate + NADP(+) = sulfoacetaldehyde + NADPH + H(+). Its pathway is organosulfur degradation. Catalyzes the formation of isethionate from 2-sulfoacetaldehyde in the deaminative pathway of taurine. The enzyme is specific for NADPH; NADH is not a substrate. Responsible for most of the activity observed in taurine-grown cells. This chain is Sulfoacetaldehyde reductase (isfD), found in Chromohalobacter salexigens (strain ATCC BAA-138 / DSM 3043 / CIP 106854 / NCIMB 13768 / 1H11).